Here is a 468-residue protein sequence, read N- to C-terminus: UDP-N-acetylmuramate--L-alanine ligase (468 aa).

118–124 (GTHGKTT) provides a ligand contact to ATP.

The protein belongs to the MurCDEF family.

The protein resides in the cytoplasm. It carries out the reaction UDP-N-acetyl-alpha-D-muramate + L-alanine + ATP = UDP-N-acetyl-alpha-D-muramoyl-L-alanine + ADP + phosphate + H(+). It participates in cell wall biogenesis; peptidoglycan biosynthesis. Its function is as follows. Cell wall formation. The chain is UDP-N-acetylmuramate--L-alanine ligase from Roseobacter denitrificans (strain ATCC 33942 / OCh 114) (Erythrobacter sp. (strain OCh 114)).